Consider the following 272-residue polypeptide: L-aspartate dehydrogenase 3 (272 aa).

Residues alanine 126 and asparagine 194 each contribute to the NAD(+) site. Residue histidine 224 is part of the active site.

The protein belongs to the L-aspartate dehydrogenase family.

The enzyme catalyses L-aspartate + NADP(+) + H2O = oxaloacetate + NH4(+) + NADPH + H(+). It carries out the reaction L-aspartate + NAD(+) + H2O = oxaloacetate + NH4(+) + NADH + H(+). The protein operates within cofactor biosynthesis; NAD(+) biosynthesis; iminoaspartate from L-aspartate (dehydrogenase route): step 1/1. Its function is as follows. Specifically catalyzes the NAD or NADP-dependent dehydrogenation of L-aspartate to iminoaspartate. The protein is L-aspartate dehydrogenase 3 of Bordetella bronchiseptica (strain ATCC BAA-588 / NCTC 13252 / RB50) (Alcaligenes bronchisepticus).